Reading from the N-terminus, the 510-residue chain is MIMSQLLNYVAVLFFCVSRASSLDTFIAAVYEHAVILPNATLVPVSPEEALAVMNRNLDLLEGAVTSASKQGAHIIVTPEDGIYGFNFTRESIYPYLEDIPDPQVNWIPCNNPDRFGHTPVQQRLSCLAKDNSIYIVANIGDKKSCNASDPQCPPDGRYQYNTDVVFDSKGKLVARYHKQNLFLNEDQFNAPKEPEVVTFNTTFGKFGIFTCFDILFHDPAVTLVRDSHVDTILFPTAWMNVLPHLSAIEFHSAWAMGMRVNFLASNLHYPLKKMTGSGIYAPDSPRAFHYDMKTEEGKLLLAQLDSHPHPTPVVNWTSYASGVEAHSVGNQEFTGIIFFDEFTFLELKEIGGNYTVCQRDLCCHLSYKMSEKRSDEVYALGAFDGLHTVEGSYYLQICTLLKCKTTDLHTCGDSVETASTRFEMFSLSGTFGTQYVFPEVLLSEIQLAPGEFQVSNDGRLFSLKPTSGPVLTVTLFGRLYEKDSAPNTLSDLTTQALRLNPKTDAWKSK.

Positions 1–22 are cleaved as a signal peptide; that stretch reads MIMSQLLNYVAVLFFCVSRASS. In terms of domain architecture, CN hydrolase spans 31–307; that stretch reads YEHAVILPNA…GKLLLAQLDS (277 aa). A glycan (N-linked (GlcNAc...) asparagine) is linked at N39. E80 functions as the Proton acceptor in the catalytic mechanism. N87 and N147 each carry an N-linked (GlcNAc...) asparagine glycan. K179 acts as the Proton donor in catalysis. N201 carries an N-linked (GlcNAc...) asparagine glycan. C212 serves as the catalytic Nucleophile. Residues N316 and N354 are each glycosylated (N-linked (GlcNAc...) asparagine). D492 is lipidated: GPI-anchor amidated aspartate. Residues 493–510 constitute a propeptide, removed in mature form; it reads LTTQALRLNPKTDAWKSK. O-linked (GalNAc...) threonine glycosylation is present at T504.

Belongs to the carbon-nitrogen hydrolase superfamily. BTD/VNN family. In terms of assembly, monomer.

The protein localises to the cell membrane. The enzyme catalyses (R)-pantetheine + H2O = cysteamine + (R)-pantothenate. Functionally, amidohydrolase that hydrolyzes specifically one of the carboamide linkages in D-pantetheine thus recycling pantothenic acid (vitamin B5) and releasing cysteamine. This chain is Pantetheinase (VNN1), found in Bos taurus (Bovine).